The following is a 203-amino-acid chain: Ras-related protein Rab-7L1 (203 aa).

Residues Ser-33, Lys-34, His-35, Tyr-36, Lys-37, and Thr-39 each contribute to the GTP site. Residues 36 to 44 (YKSTVGVDF) carry the Effector region motif. Position 71 is a phosphothreonine; by LRRK2 (Thr-71). Ser-72 carries the post-translational modification Phosphoserine; by LRRK2. The GTP site is built by Lys-126, Val-156, and Lys-157. S-geranylgeranyl cysteine attachment occurs at residues Cys-202 and Cys-203.

This sequence belongs to the small GTPase superfamily. Rab family. In terms of assembly, interacts with LRRK2 (via the N-terminus); this interaction is direct and stimulates kinase activity. In case of Salmonella enterica serovar Typhimurium (S.typhimurium) infection, is proteolytically cleaved between Gly-41 and Val-42 by the GtgE viral protease encoded on the Gifsy-2 lysogen bacteriophage, which therefore prevents the recruitment of RAB29 to S.typhimurium-containing vacuoles. In contrast, no proteolytically cleavage is detected in S.typhi-infected cells. As to expression, ubiquitous.

The protein resides in the cell membrane. The protein localises to the cytoplasm. It localises to the perinuclear region. Its subcellular location is the golgi apparatus. It is found in the golgi apparatus membrane. The protein resides in the trans-Golgi network. The protein localises to the vacuole. It localises to the cytoskeleton. The small GTPases Rab are key regulators in vesicle trafficking. Essential for maintaining the integrity of the endosome-trans-Golgi network structure. Together with LRRK2, plays a role in the retrograde trafficking pathway for recycling proteins, such as mannose 6 phosphate receptor (M6PR), between lysosomes and the Golgi apparatus in a retromer-dependent manner. Recruits LRRK2 to the Golgi complex and stimulates LRRK2 kinase activity. Stimulates phosphorylation of RAB10 'Thr-73' by LRRK2. Regulates neuronal process morphology in the intact central nervous system (CNS). May play a role in the formation of typhoid toxin transport intermediates during Salmonella enterica serovar Typhi (S.typhi) epithelial cell infection. This chain is Ras-related protein Rab-7L1 (RAB29), found in Homo sapiens (Human).